Reading from the N-terminus, the 263-residue chain is Insulin-like growth factor-binding protein 1 (263 aa).

An N-terminal signal peptide occupies residues 1 to 25 (MPEVLAVRAWPLLLSLAVQLGATVG). The 82-residue stretch at 28-109 (QPWRCAPCSA…TRGQGACMTT (82 aa)) folds into the IGFBP N-terminal domain. 6 disulfides stabilise this stretch: cysteine 32–cysteine 59, cysteine 35–cysteine 61, cysteine 43–cysteine 62, cysteine 50–cysteine 65, cysteine 73–cysteine 86, and cysteine 80–cysteine 106. The disordered stretch occupies residues 102–131 (GQGACMTTPSDEATDTKDTTSPENVSPESS). Phosphoserine occurs at positions 122, 127, 130, 148, and 160. The span at 122 to 131 (SPENVSPESS) shows a compositional bias: polar residues. At tyrosine 162 the chain carries Phosphotyrosine. The Thyroglobulin type-1 domain occupies 177 to 255 (KEPCQRELYK…SVAVRGDPKC (79 aa)). 3 cysteine pairs are disulfide-bonded: cysteine 180–cysteine 210, cysteine 221–cysteine 232, and cysteine 234–cysteine 255. Serine 246 is subject to Phosphoserine. The Cell attachment site motif lies at 250–252 (RGD).

Binds equally well IGF1 and IGF2. Interacts with integrin ITGA5:ITGB1. Interacts with VHL; this interaction inhibits HIF1A degradation.

The protein resides in the secreted. Multifunctional protein that plays a critical role in regulating the availability of IGFs such as IGF1 and IGF2 to their receptors and thereby regulates IGF-mediated cellular processes including cell migration, proliferation, differentiation or apoptosis in a cell-type specific manner. Also plays a positive role in cell migration by interacting with integrin ITGA5:ITGB1 through its RGD motif. Mechanistically, binding to integrins leads to activation of focal adhesion kinase/PTK2 and stimulation of the mitogen-activated protein kinase (MAPK) pathway. Regulates cardiomyocyte apoptosis by suppressing HIF-1alpha/HIF1A degradation through ubiquitination. This Bos taurus (Bovine) protein is Insulin-like growth factor-binding protein 1 (IGFBP1).